The sequence spans 213 residues: ATP phosphoribosyltransferase (213 aa).

Belongs to the ATP phosphoribosyltransferase family. Short subfamily. Heteromultimer composed of HisG and HisZ subunits.

It is found in the cytoplasm. It carries out the reaction 1-(5-phospho-beta-D-ribosyl)-ATP + diphosphate = 5-phospho-alpha-D-ribose 1-diphosphate + ATP. Its pathway is amino-acid biosynthesis; L-histidine biosynthesis; L-histidine from 5-phospho-alpha-D-ribose 1-diphosphate: step 1/9. Functionally, catalyzes the condensation of ATP and 5-phosphoribose 1-diphosphate to form N'-(5'-phosphoribosyl)-ATP (PR-ATP). Has a crucial role in the pathway because the rate of histidine biosynthesis seems to be controlled primarily by regulation of HisG enzymatic activity. The polypeptide is ATP phosphoribosyltransferase (Nitrosococcus oceani (strain ATCC 19707 / BCRC 17464 / JCM 30415 / NCIMB 11848 / C-107)).